The following is a 345-amino-acid chain: Ribosomal RNA small subunit methyltransferase C (345 aa).

Belongs to the methyltransferase superfamily. RsmC family. As to quaternary structure, monomer.

It is found in the cytoplasm. The catalysed reaction is guanosine(1207) in 16S rRNA + S-adenosyl-L-methionine = N(2)-methylguanosine(1207) in 16S rRNA + S-adenosyl-L-homocysteine + H(+). Functionally, specifically methylates the guanine in position 1207 of 16S rRNA in the 30S particle. The protein is Ribosomal RNA small subunit methyltransferase C of Shewanella denitrificans (strain OS217 / ATCC BAA-1090 / DSM 15013).